The chain runs to 345 residues: Trans-3-hydroxy-L-proline dehydratase (345 aa).

The active-site Proton acceptor is the Ser-90. Substrate is bound by residues 91–92 (GS), Asp-252, and 257–258 (GT).

The protein belongs to the proline racemase family.

The enzyme catalyses trans-3-hydroxy-L-proline = 1-pyrroline-2-carboxylate + H2O. In terms of biological role, catalyzes the dehydration of trans-3-hydroxy-L-proline (t3LHyp) to Delta(1)-pyrroline-2-carboxylate (Pyr2C). May be involved in a degradation pathway that converts t3LHyp to L-proline, which would allow S.novella to grow on t3LHyp as a sole carbon source. The polypeptide is Trans-3-hydroxy-L-proline dehydratase (Ancylobacter novellus (strain ATCC 8093 / DSM 506 / JCM 20403 / CCM 1077 / IAM 12100 / NBRC 12443 / NCIMB 10456) (Starkeya novella)).